Here is a 580-residue protein sequence, read N- to C-terminus: Glypican-3 (580 aa).

The signal sequence occupies residues 1-24 (MAGTVRTACLVVAMLLSLDFPGQA). Gln25 bears the Pyrrolidone carboxylic acid mark. Disulfide bonds link Cys35–Cys72, Cys65–Cys262, Cys73–Cys265, Cys197–Cys349, Cys252–Cys285, Cys274–Cys422, and Cys278–Cys410. N-linked (GlcNAc...) asparagine glycans are attached at residues Asn124 and Asn241. Residue Ser352 is modified to Phosphoserine; by FAM20C. The N-linked (GlcNAc...) asparagine glycan is linked to Asn418. O-linked (Xyl...) (glycosaminoglycan) serine glycans are attached at residues Ser495 and Ser509. Asn554 carries the GPI-anchor amidated asparagine lipid modification. The propeptide at 555 to 580 (LGNVHSPLKLLTSMAISVVCFFFLVH) is removed in mature form.

This sequence belongs to the glypican family. As to quaternary structure, heterodimer; disulfide-linked. Cleavage by a furin-like convertase results in production of alpha and beta chains which form a disulfide-linked heterodimer. Interacts with DPP4. Interacts with FGF2. Interacts with WNT5A. Also interacts with WNT3A and WNT7B. Interacts with hedgehog protein SHH; the heparan sulfate chains are not required for the interaction. Also interacts with hedgehog protein IHH. Interacts with CD81. Interacts with Wnt receptors FZD4, FZD7 and FZD8; the heparan sulfate chains are required for the interaction. Post-translationally, O-glycosylated; contains heparan sulfate and/or chondroitin sulfate. Cleaved intracellularly by a furin-like convertase to generate 2 subunits, alpha and beta, which remain associated through disulfide bonds and are associated with the cell surface via the GPI-anchor. This processing is essential for its role in inhibition of hedgehog signaling. A second proteolytic event may result in cleavage of the protein on the cell surface, separating it from the GPI-anchor and leading to its shedding from the cell surface. Detected in placenta (at protein level). Highly expressed in lung, liver and kidney.

It is found in the cell membrane. Its function is as follows. Cell surface proteoglycan. Negatively regulates the hedgehog signaling pathway when attached via the GPI-anchor to the cell surface by competing with the hedgehog receptor PTC1 for binding to hedgehog proteins. Binding to the hedgehog protein SHH triggers internalization of the complex by endocytosis and its subsequent lysosomal degradation. Positively regulates the canonical Wnt signaling pathway by binding to the Wnt receptor Frizzled and stimulating the binding of the Frizzled receptor to Wnt ligands. Positively regulates the non-canonical Wnt signaling pathway. Binds to CD81 which decreases the availability of free CD81 for binding to the transcriptional repressor HHEX, resulting in nuclear translocation of HHEX and transcriptional repression. Inhibits the dipeptidyl peptidase activity of DPP4. Plays a role in limb patterning and skeletal development by controlling the cellular response to BMP4. Modulates the effects of growth factors BMP2, BMP7 and FGF7 on renal branching morphogenesis. Required for coronary vascular development. Plays a role in regulating cell movements during gastrulation. In Homo sapiens (Human), this protein is Glypican-3 (GPC3).